Consider the following 221-residue polypeptide: Glutathione peroxidase 6 (221 aa).

An N-terminal signal peptide occupies residues 1–19 (MAQKLWGSCLFSLFMAALA). Cys73 is a catalytic residue.

This sequence belongs to the glutathione peroxidase family.

It localises to the secreted. It catalyses the reaction 2 glutathione + H2O2 = glutathione disulfide + 2 H2O. The polypeptide is Glutathione peroxidase 6 (Gpx6) (Mus musculus (Mouse)).